An 863-amino-acid polypeptide reads, in one-letter code: Importin subunit beta-1 (863 aa).

19 HEAT repeats span residues 2–31 (NAGE…AART), 33–62 (FAQY…LALK), 85–124 (VEIK…ELAT), 129–159 (DLMV…YICE), 170–201 (SNAI…LYDS), 212–248 (EYER…MHLY), 253–299 (PFYM…EIQE), 314–360 (FARA…QVVG), 364–392 (VNPV…AFGS), 399–439 (VAML…SSFV), 449–481 (LSPM…VCHF), 496–530 (YEAI…LITF), 536–586 (LPMI…IIRR), 592–630 (RTSS…MNSL), 635–671 (EVYV…LARA), 677–715 (LPYC…ALAI), 720–767 (QTYL…ITQA), 778–815 (QPYV…LAES), and 822–861 (KSYF…KRQA). The Importin N-terminal domain occupies 21–101 (AEKQLENAAR…KSLALQTLGS (81 aa)).

Belongs to the importin beta family. Importin beta-1 subfamily. As to quaternary structure, forms a complex with an importin alpha subunit. Interacts with Ran; interacts specifically with the GTP-bound form of Ran (GTP-Ran), protecting it from GTP hydrolysis and nucleotide exchange. Interacts with nucleoporins.

The protein localises to the cytoplasm. The protein resides in the nucleus envelope. Its subcellular location is the nucleus. It localises to the nuclear pore complex. Importin beta subunit that functions in nuclear protein import through association with the importin alpha subunit, which binds to the clasical nuclear localization signal (cNLS) in cargo substrates. Docking of the importin/substrate complex to the nuclear pore complex (NPC) is mediated by importin beta through binding to nucleoporin FxFG repeats and the complex is subsequently translocated through the pore by an energy requiring, Ran-dependent mechanism. At the nucleoplasmic side of the NPC, GTP-Ran binds to importin beta and the three components separate, leading to release of the cargo. Importin alpha and beta are re-exported from the nucleus to the cytoplasm where GTP hydrolysis releases Ran from importin beta. The directionality of nuclear import is thought to be conferred by an asymmetric distribution of the GTP- and GDP-bound forms of Ran between the cytoplasm and nucleus. This Schizosaccharomyces pombe (strain 972 / ATCC 24843) (Fission yeast) protein is Importin subunit beta-1.